The following is a 164-amino-acid chain: Glutamate uptake regulatory protein (164 aa).

An HTH asnC-type domain is found at 5–66 (LDDFDIKILD…LLDPQKIGLG (62 aa)). Residues 24 to 43 (MAELSEKTGLSANACWRRIR) constitute a DNA-binding region (H-T-H motif).

Represses the secondary, H(+)-coupled glutamate uptake system (Gluemp) genes. The polypeptide is Glutamate uptake regulatory protein (grp) (Zymomonas mobilis subsp. mobilis (strain ATCC 31821 / ZM4 / CP4)).